The following is a 375-amino-acid chain: Peroxisomal targeting signal 2 receptor (375 aa).

6 WD repeats span residues 58 to 89 (LTQD…RLFD), 102 to 133 (EHER…KIWS), 172 to 203 (KNRN…SLFD), 218 to 249 (HSGL…RIWD), 281 to 312 (AHGL…RIWR), and 340 to 372 (QHSE…FVWN).

The protein belongs to the WD repeat peroxin-7 family. Interacts with PEX21.

It is found in the cytoplasm. Its subcellular location is the cytosol. The protein resides in the peroxisome matrix. In terms of biological role, receptor required for the peroxisomal import of proteins containing a C-terminal PTS2-type peroxisomal targeting signal, such as 3-oxoacyl-CoA thiolase. Specifically binds to cargo proteins containing a PTS2 peroxisomal targeting signal in the cytosol. Cargo protein-binding triggers interaction with PEX21 and formation of a ternary complex composed of PEX21 and PEX7 along with PTS2-containing cargo proteins, which is tranlocated into peroxisomes by passing through the PEX13-PEX14 docking complex. This Saccharomyces cerevisiae (strain ATCC 204508 / S288c) (Baker's yeast) protein is Peroxisomal targeting signal 2 receptor.